An 829-amino-acid polypeptide reads, in one-letter code: Probable beta-glucosidase H (829 aa).

A glycan (N-linked (GlcNAc...) asparagine) is linked at asparagine 13. Residue aspartate 225 is part of the active site. N-linked (GlcNAc...) asparagine glycans are attached at residues asparagine 304, asparagine 473, asparagine 602, asparagine 627, and asparagine 664. In terms of domain architecture, PA14 spans 389–548; sequence RMLSNAVIHF…DPEQMVANAV (160 aa).

The protein belongs to the glycosyl hydrolase 3 family.

It localises to the secreted. It carries out the reaction Hydrolysis of terminal, non-reducing beta-D-glucosyl residues with release of beta-D-glucose.. It participates in glycan metabolism; cellulose degradation. Its function is as follows. Beta-glucosidases are one of a number of cellulolytic enzymes involved in the degradation of cellulosic biomass. Catalyzes the last step releasing glucose from the inhibitory cellobiose. The chain is Probable beta-glucosidase H (bglH) from Neosartorya fischeri (strain ATCC 1020 / DSM 3700 / CBS 544.65 / FGSC A1164 / JCM 1740 / NRRL 181 / WB 181) (Aspergillus fischerianus).